The primary structure comprises 140 residues: Protein ARABIDOPSIS THALIANA ANTHER 7 (140 aa).

Residues 1-20 form the signal peptide; that stretch reads MKIHAILVVAFLVLMKTAVS. Disulfide bonds link Cys-29–Cys-87, Cys-39–Cys-54, Cys-55–Cys-111, and Cys-85–Cys-125.

It belongs to the plant LTP family. In terms of tissue distribution, tapetum-specific. Also present in pollen.

Its subcellular location is the endoplasmic reticulum lumen. This chain is Protein ARABIDOPSIS THALIANA ANTHER 7, found in Arabidopsis thaliana (Mouse-ear cress).